A 356-amino-acid polypeptide reads, in one-letter code: Histidinol-phosphate aminotransferase (356 aa).

Position 211 is an N6-(pyridoxal phosphate)lysine (K211).

Belongs to the class-II pyridoxal-phosphate-dependent aminotransferase family. Histidinol-phosphate aminotransferase subfamily. In terms of assembly, homodimer. Requires pyridoxal 5'-phosphate as cofactor.

It catalyses the reaction L-histidinol phosphate + 2-oxoglutarate = 3-(imidazol-4-yl)-2-oxopropyl phosphate + L-glutamate. It participates in amino-acid biosynthesis; L-histidine biosynthesis; L-histidine from 5-phospho-alpha-D-ribose 1-diphosphate: step 7/9. This chain is Histidinol-phosphate aminotransferase, found in Blochmanniella floridana.